Here is a 172-residue protein sequence, read N- to C-terminus: NAD(P)H-quinone oxidoreductase subunit J (172 aa).

It belongs to the complex I 30 kDa subunit family. In terms of assembly, NDH-1 can be composed of about 15 different subunits; different subcomplexes with different compositions have been identified which probably have different functions.

It localises to the cellular thylakoid membrane. The enzyme catalyses a plastoquinone + NADH + (n+1) H(+)(in) = a plastoquinol + NAD(+) + n H(+)(out). It catalyses the reaction a plastoquinone + NADPH + (n+1) H(+)(in) = a plastoquinol + NADP(+) + n H(+)(out). NDH-1 shuttles electrons from an unknown electron donor, via FMN and iron-sulfur (Fe-S) centers, to quinones in the respiratory and/or the photosynthetic chain. The immediate electron acceptor for the enzyme in this species is believed to be plastoquinone. Couples the redox reaction to proton translocation, and thus conserves the redox energy in a proton gradient. Cyanobacterial NDH-1 also plays a role in inorganic carbon-concentration. The protein is NAD(P)H-quinone oxidoreductase subunit J of Synechococcus sp. (strain ATCC 27144 / PCC 6301 / SAUG 1402/1) (Anacystis nidulans).